Here is a 398-residue protein sequence, read N- to C-terminus: F-box/kelch-repeat protein At1g30090 (398 aa).

The F-box domain maps to 51-98; sequence EPLIPGLPDDVALNCLLRVPVQSHVSSKSVCKRWHLLFGTKETFFAKR. 5 Kelch repeats span residues 106-152, 159-207, 209-255, 257-304, and 305-346; these read PWLF…FRSV, TMFV…VIDG, IYAA…VLNG, LLVT…IYDR, and LFIV…AVNC.

The sequence is that of F-box/kelch-repeat protein At1g30090 from Arabidopsis thaliana (Mouse-ear cress).